The primary structure comprises 376 residues: Alcohol dehydrogenase 1 (376 aa).

The residue at position 2 (S2) is an N-acetylserine. The Zn(2+) site is built by C47, H68, C98, C101, C104, C112, and C176. NAD(+) contacts are provided by residues G201–G206, D225, K230, V294–V296, and R371.

The protein belongs to the zinc-containing alcohol dehydrogenase family. Class-I subfamily. As to quaternary structure, homodimer. The cofactor is Zn(2+).

The protein resides in the cytoplasm. It carries out the reaction a primary alcohol + NAD(+) = an aldehyde + NADH + H(+). The enzyme catalyses a secondary alcohol + NAD(+) = a ketone + NADH + H(+). The sequence is that of Alcohol dehydrogenase 1 (ADH1) from Gallus gallus (Chicken).